We begin with the raw amino-acid sequence, 343 residues long: Hydroxymethylglutaryl-CoA synthase (343 aa).

Residues D28 and A29 each contribute to the (3S)-3-hydroxy-3-methylglutaryl-CoA site. Catalysis depends on E80, which acts as the Proton donor/acceptor. C112 is a binding site for (3S)-3-hydroxy-3-methylglutaryl-CoA. Residue C112 is the Acyl-thioester intermediate of the active site. R198 contacts CoA. (3S)-3-hydroxy-3-methylglutaryl-CoA-binding residues include T200 and H233. H233 serves as the catalytic Proton donor/acceptor. K238 contributes to the CoA binding site. R242, N265, and S295 together coordinate (3S)-3-hydroxy-3-methylglutaryl-CoA.

The protein belongs to the thiolase-like superfamily. Archaeal HMG-CoA synthase family. Interacts with acetoacetyl-CoA thiolase that catalyzes the precedent step in the pathway and with a DUF35 protein. The acetoacetyl-CoA thiolase/HMG-CoA synthase complex channels the intermediate via a fused CoA-binding site, which allows for efficient coupling of the endergonic thiolase reaction with the exergonic HMGCS reaction.

It carries out the reaction acetoacetyl-CoA + acetyl-CoA + H2O = (3S)-3-hydroxy-3-methylglutaryl-CoA + CoA + H(+). It functions in the pathway metabolic intermediate biosynthesis; (R)-mevalonate biosynthesis; (R)-mevalonate from acetyl-CoA: step 2/3. Functionally, catalyzes the condensation of acetyl-CoA with acetoacetyl-CoA to form 3-hydroxy-3-methylglutaryl-CoA (HMG-CoA). Functions in the mevalonate (MVA) pathway leading to isopentenyl diphosphate (IPP), a key precursor for the biosynthesis of isoprenoid compounds that are building blocks of archaeal membrane lipids. This is Hydroxymethylglutaryl-CoA synthase from Archaeoglobus fulgidus (strain ATCC 49558 / DSM 4304 / JCM 9628 / NBRC 100126 / VC-16).